The following is a 480-amino-acid chain: Aromatic-L-amino-acid decarboxylase (480 aa).

Methionine 1 carries the N-acetylmethionine modification. Tandem repeats lie at residues 58 to 115 (RDIE…TELE) and 118 to 178 (MMDW…TQAA). The tract at residues 58–178 (RDIEKIIMPG…AASPELTQAA (121 aa)) is 2 X approximate tandem repeats. Residue threonine 82 participates in substrate binding. Residues alanine 148 and serine 149 each contribute to the pyridoxal 5'-phosphate site. Histidine 192 is a substrate binding site. Residues threonine 246 and asparagine 300 each contribute to the pyridoxal 5'-phosphate site. An N6-(pyridoxal phosphate)lysine modification is found at lysine 303.

This sequence belongs to the group II decarboxylase family. Homodimer. Requires pyridoxal 5'-phosphate as cofactor.

It catalyses the reaction L-dopa + H(+) = dopamine + CO2. It carries out the reaction 5-hydroxy-L-tryptophan + H(+) = serotonin + CO2. Its pathway is catecholamine biosynthesis; dopamine biosynthesis; dopamine from L-tyrosine: step 2/2. Functionally, catalyzes the decarboxylation of L-3,4-dihydroxyphenylalanine (DOPA) to dopamine and L-5-hydroxytryptophan to serotonin. The protein is Aromatic-L-amino-acid decarboxylase of Rattus norvegicus (Rat).